Here is a 305-residue protein sequence, read N- to C-terminus: Major pollen allergen Pha a 5.2 (305 aa).

An N-terminal signal peptide occupies residues 1-25 (MAVQKYTVALFLAVALVAGPAALYA). Over residues 65-85 (GLNEEKNAARQTDDEQKRSDE) the composition is skewed to basic and acidic residues. Disordered stretches follow at residues 65 to 87 (GLNEEKNAARQTDDEQKRSDEIN) and 279 to 299 (STATPAAPPPPQLGTATPAAV).

Belongs to the Poa p IX/Phl p VI allergen family.

This Phalaris aquatica (Canary grass) protein is Major pollen allergen Pha a 5.2.